We begin with the raw amino-acid sequence, 653 residues long: Sodium-dependent nutrient amino acid transporter 1 (653 aa).

The segment at 1–55 is disordered; it reads MELKGVHQQNGTSNGTGAAGTEGESPPPAPAPATAEAAASLETTTEKVDAEQQKT. The Cytoplasmic segment spans residues 1–59; that stretch reads MELKGVHQQNGTSNGTGAAGTEGESPPPAPAPATAEAAASLETTTEKVDAEQQKTERTN. Low complexity-rich tracts occupy residues 10 to 24 and 32 to 43; these read NGTS…TEGE and PATAEAAASLET. A compositionally biased stretch (basic and acidic residues) spans 44–55; it reads TTEKVDAEQQKT. A run of 4 helical transmembrane segments spans residues 60–80, 93–113, 125–145, and 146–166; these read WGNG…LGNV, GAFL…MYYL, TVKI…QAFA, and TICI…YLFV. N-linked (GlcNAc...) asparagine glycosylation is found at Asn-202 and Asn-205. The next 9 helical transmembrane spans lie at 241–261, 270–290, 319–339, 353–373, 413–433, 459–479, 486–506, 528–548, and 565–585; these read PDWK…LVIM, AAYF…VRAV, AVVQ…MFAS, IVTT…FAIL, LFSV…IVAL, ICGF…ILTL, TYVV…IYGM, CWSF…MVTI, and AGWL…MWYI.

This sequence belongs to the sodium:neurotransmitter symporter (SNF) (TC 2.A.22) family.

It is found in the membrane. Its function is as follows. Unusual broad substrate spectrum amino acid:sodium cotransporter that promotes absorption of the D isomers of essential amino acids. Neutral amino acids are the preferred substrates, especially methionine and phenylalanine. The polypeptide is Sodium-dependent nutrient amino acid transporter 1 (Drosophila pseudoobscura pseudoobscura (Fruit fly)).